The primary structure comprises 111 residues: Small ribosomal subunit protein bS16 (111 aa).

Belongs to the bacterial ribosomal protein bS16 family.

The protein is Small ribosomal subunit protein bS16 of Rickettsia canadensis (strain McKiel).